The chain runs to 1903 residues: Plexin-A4 (1903 aa).

The N-terminal stretch at 1-26 (MAFHNRRWNFTFSCCVVVLLLPLVAA) is a signal peptide. Residues 27–515 (RPQQPSAATR…SESQLTRVPV (489 aa)) enclose the Sema domain. The Extracellular portion of the chain corresponds to 27–1246 (RPQQPSAATR…ITSDSPLSST (1220 aa)). Intrachain disulfides connect Cys-97/Cys-106 and Cys-132/Cys-140. N-linked (GlcNAc...) asparagine glycosylation is present at Asn-166. Disulfide bonds link Cys-291–Cys-413, Cys-307–Cys-364, and Cys-382–Cys-401. N-linked (GlcNAc...) asparagine glycosylation is present at Asn-450. A PSI 1 domain is found at 517-567 (ACEQYSSCNECLGSGDPHCGWCVLHSMCTRKEKCERSSEPRRFASNIKQCV). Intrachain disulfides connect Cys-518-Cys-535, Cys-524-Cys-566, Cys-527-Cys-544, and Cys-538-Cys-550. Asn-575 and Asn-600 each carry an N-linked (GlcNAc...) asparagine glycan. Cys-601 and Cys-620 are joined by a disulfide. N-linked (GlcNAc...) asparagine glycosylation is found at Asn-656, Asn-663, Asn-764, and Asn-772. Residues 663 to 710 (NCSVHKSCLSCVGSPYQCHWCKYRHTCTHDPSSCSFQEGRVKQPEECP) form the PSI 2 domain. The PSI 3 domain occupies 811–864 (KCDARRESCGLCLKADPLFGCVWCKGENRCSLKQHCSYPQSMWLEHNGINSKCT). IPT/TIG domains are found at residues 866-960 (PRIT…YYFV), 962-1046 (PQLL…FEYV), 1049-1148 (PTIT…FVYY), and 1151-1246 (PVFE…LSST). N-linked (GlcNAc...) asparagine glycosylation is found at Asn-981, Asn-992, Asn-1025, Asn-1141, Asn-1189, and Asn-1214. Residues 1247-1267 (AVISIAGAGGLLIFFIVIVLI) form a helical membrane-spanning segment. Over 1268-1903 (AYKRKSRESD…QVVAFMSLES (636 aa)) the chain is Cytoplasmic.

The protein belongs to the plexin family.

It is found in the cell membrane. Involved in the development of primary sensory neurons especially in branching of the peripheral axons. Interacts with the SLIT2 signaling specifically to promote axonal branching of Rohon-Beard neurons and the trigeminal sensory ganglion neurons. The protein is Plexin-A4 (plxna4) of Danio rerio (Zebrafish).